The sequence spans 403 residues: Large ribosomal subunit protein uL3 (403 aa).

Positions 1 to 38 (MSHRKFSAPRHGSLGFLPRKRSSRHRGKVKSFPKDDSS) are disordered. A Phosphoserine modification is found at serine 13. Residues 18–31 (PRKRSSRHRGKVKS) show a composition bias toward basic residues. Lysine 39 is covalently cross-linked (Glycyl lysine isopeptide (Lys-Gly) (interchain with G-Cter in SUMO2)). N6-acetyllysine is present on lysine 136. Residues lysine 224 and lysine 226 each participate in a glycyl lysine isopeptide (Lys-Gly) (interchain with G-Cter in SUMO2) cross-link. At histidine 245 the chain carries Tele-methylhistidine. N6-acetyllysine; alternate is present on residues lysine 286 and lysine 294. Lysine 286 is covalently cross-linked (Glycyl lysine isopeptide (Lys-Gly) (interchain with G-Cter in SUMO2); alternate). Lysine 294 participates in a covalent cross-link: Glycyl lysine isopeptide (Lys-Gly) (interchain with G-Cter in SUMO1); alternate. At serine 304 the chain carries Phosphoserine. Lysine 366 carries the post-translational modification N6-acetyllysine; alternate. Lysine 366 is covalently cross-linked (Glycyl lysine isopeptide (Lys-Gly) (interchain with G-Cter in SUMO2); alternate). Residue lysine 373 is modified to N6-acetyllysine. Residues lysine 386, lysine 393, and lysine 399 each participate in a glycyl lysine isopeptide (Lys-Gly) (interchain with G-Cter in SUMO2) cross-link.

The protein belongs to the universal ribosomal protein uL3 family. As to quaternary structure, component of the large ribosomal subunit. Interacts with DHX33. Constitutively monomethylated at His-245 by METTL18. Methylation at His-245 regulates translation elongation by slowing ribosome traversal on tyrosine codons: slower elongation provides enough time for proper folding of synthesized proteins and prevents cellular aggregation of tyrosine-rich proteins It is not required for incorporation of RPL3 into ribosomes.

Its subcellular location is the nucleus. It localises to the nucleolus. The protein localises to the cytoplasm. Its function is as follows. Component of the large ribosomal subunit. The ribosome is a large ribonucleoprotein complex responsible for the synthesis of proteins in the cell. The polypeptide is Large ribosomal subunit protein uL3 (RPL3) (Bos taurus (Bovine)).